The following is a 101-amino-acid chain: Ascorbate-specific PTS system EIIB component (101 aa).

In terms of domain architecture, PTS EIIB type-2 spans 3 to 96 (VRILAVCGNG…KLLEVIKAHF (94 aa)). Catalysis depends on cysteine 9, which acts as the Phosphocysteine intermediate. Cysteine 9 carries the post-translational modification Phosphocysteine.

It is found in the cytoplasm. The enzyme catalyses N(pros)-phospho-L-histidyl-[protein] + L-ascorbate(out) = L-ascorbate 6-phosphate(in) + L-histidyl-[protein]. In terms of biological role, the phosphoenolpyruvate-dependent sugar phosphotransferase system (sugar PTS), a major carbohydrate active transport system, catalyzes the phosphorylation of incoming sugar substrates concomitantly with their translocation across the cell membrane. The enzyme II UlaABC PTS system is involved in ascorbate transport. In Escherichia coli O6:H1 (strain CFT073 / ATCC 700928 / UPEC), this protein is Ascorbate-specific PTS system EIIB component (ulaB).